Reading from the N-terminus, the 122-residue chain is Large ribosomal subunit protein bL12 (122 aa).

This sequence belongs to the bacterial ribosomal protein bL12 family. Homodimer. Part of the ribosomal stalk of the 50S ribosomal subunit. Forms a multimeric L10(L12)X complex, where L10 forms an elongated spine to which 2 to 4 L12 dimers bind in a sequential fashion. Binds GTP-bound translation factors.

Functionally, forms part of the ribosomal stalk which helps the ribosome interact with GTP-bound translation factors. Is thus essential for accurate translation. The sequence is that of Large ribosomal subunit protein bL12 from Buchnera aphidicola subsp. Baizongia pistaciae (strain Bp).